A 209-amino-acid polypeptide reads, in one-letter code: ATP-dependent Clp protease proteolytic subunit (209 aa).

Serine 107 acts as the Nucleophile in catalysis. Histidine 132 is an active-site residue.

This sequence belongs to the peptidase S14 family. Fourteen ClpP subunits assemble into 2 heptameric rings which stack back to back to give a disk-like structure with a central cavity, resembling the structure of eukaryotic proteasomes.

The protein resides in the cytoplasm. The catalysed reaction is Hydrolysis of proteins to small peptides in the presence of ATP and magnesium. alpha-casein is the usual test substrate. In the absence of ATP, only oligopeptides shorter than five residues are hydrolyzed (such as succinyl-Leu-Tyr-|-NHMec, and Leu-Tyr-Leu-|-Tyr-Trp, in which cleavage of the -Tyr-|-Leu- and -Tyr-|-Trp bonds also occurs).. Functionally, cleaves peptides in various proteins in a process that requires ATP hydrolysis. Has a chymotrypsin-like activity. Plays a major role in the degradation of misfolded proteins. This Methylobacterium nodulans (strain LMG 21967 / CNCM I-2342 / ORS 2060) protein is ATP-dependent Clp protease proteolytic subunit.